Reading from the N-terminus, the 640-residue chain is MISWHDLYTVLTAVIPLYVAMILAYGSVRWWKIFSPDQCSGINRFVAIFAVPLLSFHFISTNNPYAMNLRFIAADTLQKIIMLSLLVLWANFTRSGSLEWSITIFSLSTLPNTLVMGIPLLIAMYGEYSGSLMVQIVVLQCIIWYTLLLFLFEFRGAKMLIMEQFPETAASIVSFKVESDVVSLDGHDFLETDAEIGDDGKLHVTVRKSNASRRSFCGPNMTPRPSNLTGAEIYSLSTTPRGSNFNHSDFYNMMGFPGGRLSNFGPADMYSVQSSRGPTPRPSNFEENCAMASSPRFGYYPGGGAGSYPAPNPEFSSTTTSTANKSVNKNPKDVNTNQQTTLPTGGKSNSHDAKELHMFVWSSNGSPVSDRAGLNVFGGAPDNDQGGRSDQGAKEIRMLVPDQSHNGETKAVAHPASGDFGGEQQFSFAGKEEEAERPKDAENGLNKLAPNSTAALQSKTGLGGAEASQRKNMPPASVMTRLILIMVWRKLIRNPNTYSSLIGLIWALVAFRWHVAMPKIIQQSISILSDAGLGMAMFSLGLFMALQPKLIACGNSVATFAMAVRFLTGPAVMAVAAIAIGLRGDLLRVAIVQAALPQGIVPFVFAKEYNVHPAILSTGVIFGMLIALPITLVYYILLGL.

Over Met-1 to Leu-7 the chain is Extracellular. Residues Tyr-8–Val-28 form a helical membrane-spanning segment. The Cytoplasmic portion of the chain corresponds to Arg-29–Gln-38. The chain crosses the membrane as a helical span at residues Cys-39–Ile-59. Val-51 provides a ligand contact to (indol-3-yl)acetate. Topologically, residues Ser-60–Phe-71 are extracellular. The chain crosses the membrane as a helical span at residues Ile-72 to Phe-92. Residues Thr-93–Ser-101 lie on the Cytoplasmic side of the membrane. A helical membrane pass occupies residues Ile-102 to Ile-122. (indol-3-yl)acetate-binding residues include Asn-112 and Leu-114. At Ala-123–Ser-131 the chain is on the extracellular side. Residues Leu-132–Phe-152 traverse the membrane as a helical segment. Residue Tyr-145 participates in (indol-3-yl)acetate binding. Over Glu-153–Ser-500 the chain is Cytoplasmic. Ser-226, Ser-243, and Ser-283 each carry phosphoserine. The disordered stretch occupies residues Ala-310 to His-351. A compositionally biased stretch (polar residues) spans Glu-314 to Ser-348. Thr-322 is subject to Phosphothreonine. Ser-366 carries the phosphoserine modification. 2 disordered regions span residues Ala-372–Gln-391 and Ser-404–Lys-471. Positions Gly-430–Glu-442 are enriched in basic and acidic residues. Residues Ala-449–Thr-460 show a composition bias toward polar residues. A helical membrane pass occupies residues Leu-501–Ile-521. Residues Gln-522–Ser-524 are Extracellular-facing. A helical transmembrane segment spans residues Ile-525–Ala-545. Residues Leu-546–Thr-559 are Cytoplasmic-facing. Residues Phe-560–Ile-580 form a helical membrane-spanning segment. Over Gly-581–Asp-585 the chain is Extracellular. Residues Leu-586–Ala-606 form a helical membrane-spanning segment. 2 residues coordinate (indol-3-yl)acetate: Ile-600 and Val-601. The Cytoplasmic portion of the chain corresponds to Lys-607–Gly-619. The chain crosses the membrane as a helical span at residues Val-620 to Leu-640.

Belongs to the auxin efflux carrier (TC 2.A.69.1) family. Homodimer. Predominantly expressed at the lateral side of shoot endodermis cells as well as root pericycle and columella cells.

Its subcellular location is the cell membrane. Auxin efflux carrier activity is competitively inhibited by naptalamate (N-1-naphthylphthalamic acid, NPA). In terms of biological role, acts as a component of the auxin efflux carrier; this activity is enhanced when activated by PID-mediated phosphorylation. Seems to be involved in the lateral auxin transport system. Together with PIN4 and PIN7, involved in the connective auxin transport (CAT) that ensures communication across the shoot system, and modulates strigolactone-mediated shoot branching control. Binds auxins including indole-3-acetic acid (IAA). Coordinated polar localization of PIN3 is directly regulated by the vesicle trafficking process. The polypeptide is Auxin efflux carrier component 3 (Arabidopsis thaliana (Mouse-ear cress)).